A 342-amino-acid polypeptide reads, in one-letter code: Aromatic amino acid aminotransferase (342 aa).

K214 is subject to N6-(pyridoxal phosphate)lysine.

It belongs to the class-II pyridoxal-phosphate-dependent aminotransferase family. Homodimer. It depends on pyridoxal 5'-phosphate as a cofactor.

The catalysed reaction is an aromatic L-alpha-amino acid + 2-oxoglutarate = an aromatic oxo-acid + L-glutamate. Functionally, aminotransferase that catalyzes the conversion of aromatic amino acids and 2-oxoglutarate into corresponding aromatic oxo acids and L-glutamate. This chain is Aromatic amino acid aminotransferase, found in Corynebacterium efficiens (strain DSM 44549 / YS-314 / AJ 12310 / JCM 11189 / NBRC 100395).